The chain runs to 466 residues: 3-isopropylmalate dehydratase large subunit (466 aa).

[4Fe-4S] cluster is bound by residues cysteine 347, cysteine 407, and cysteine 410.

This sequence belongs to the aconitase/IPM isomerase family. LeuC type 1 subfamily. As to quaternary structure, heterodimer of LeuC and LeuD. [4Fe-4S] cluster serves as cofactor.

The catalysed reaction is (2R,3S)-3-isopropylmalate = (2S)-2-isopropylmalate. Its pathway is amino-acid biosynthesis; L-leucine biosynthesis; L-leucine from 3-methyl-2-oxobutanoate: step 2/4. Catalyzes the isomerization between 2-isopropylmalate and 3-isopropylmalate, via the formation of 2-isopropylmaleate. The protein is 3-isopropylmalate dehydratase large subunit of Escherichia fergusonii (strain ATCC 35469 / DSM 13698 / CCUG 18766 / IAM 14443 / JCM 21226 / LMG 7866 / NBRC 102419 / NCTC 12128 / CDC 0568-73).